The following is a 147-amino-acid chain: D-aminoacyl-tRNA deacylase (147 aa).

Positions 137–138 match the Gly-cisPro motif, important for rejection of L-amino acids motif; the sequence is GP.

Belongs to the DTD family. Homodimer.

Its subcellular location is the cytoplasm. It catalyses the reaction glycyl-tRNA(Ala) + H2O = tRNA(Ala) + glycine + H(+). The catalysed reaction is a D-aminoacyl-tRNA + H2O = a tRNA + a D-alpha-amino acid + H(+). An aminoacyl-tRNA editing enzyme that deacylates mischarged D-aminoacyl-tRNAs. Also deacylates mischarged glycyl-tRNA(Ala), protecting cells against glycine mischarging by AlaRS. Acts via tRNA-based rather than protein-based catalysis; rejects L-amino acids rather than detecting D-amino acids in the active site. By recycling D-aminoacyl-tRNA to D-amino acids and free tRNA molecules, this enzyme counteracts the toxicity associated with the formation of D-aminoacyl-tRNA entities in vivo and helps enforce protein L-homochirality. This is D-aminoacyl-tRNA deacylase from Acinetobacter baumannii (strain ACICU).